An 85-amino-acid polypeptide reads, in one-letter code: Small ribosomal subunit protein uS17 (85 aa).

It belongs to the universal ribosomal protein uS17 family. In terms of assembly, part of the 30S ribosomal subunit.

One of the primary rRNA binding proteins, it binds specifically to the 5'-end of 16S ribosomal RNA. In Citrifermentans bemidjiense (strain ATCC BAA-1014 / DSM 16622 / JCM 12645 / Bem) (Geobacter bemidjiensis), this protein is Small ribosomal subunit protein uS17.